The sequence spans 298 residues: Probable deoxyhypusine synthase 2 (298 aa).

Residue K259 is the Nucleophile of the active site.

It belongs to the deoxyhypusine synthase family. Requires NAD(+) as cofactor.

It carries out the reaction [eIF5A protein]-L-lysine + spermidine = [eIF5A protein]-deoxyhypusine + propane-1,3-diamine. Its pathway is protein modification; eIF5A hypusination. Its function is as follows. Catalyzes the NAD-dependent oxidative cleavage of spermidine and the subsequent transfer of the butylamine moiety of spermidine to the epsilon-amino group of a specific lysine residue of the eIF-5A precursor protein to form the intermediate deoxyhypusine residue. The polypeptide is Probable deoxyhypusine synthase 2 (dys2) (Archaeoglobus fulgidus (strain ATCC 49558 / DSM 4304 / JCM 9628 / NBRC 100126 / VC-16)).